The primary structure comprises 374 residues: MKTASKFSVMFFMLLALCGCWDVKDIEQLSFARGLAIDETNDHQYKLTYQNLLPQSEDSQASGKPEFVNVTSHGKTILEAVSDVSIKDPPVYSDHLKVILLGEKLMRNQNVDQVLNHFIRDDELRRSSYLMAARGNAADVFTKGNPNQQQPMPSEKLIDLTTHSGYNGKIMIPLRIGRASVYSQNGYSYLIQAVKNEKGKAKYDGAGIIKRGSNKLVGFLSADETQTLSWVMGTIQGGVMPTTDKGHPITFEIKKSKTKIKPVIENGKPVFHISVKTKGILTEDQNPNENSFSKSYLHRLENIFEKKLERDVKQVMDKLQHEYKTDPVFLSDHIRIQHPDYWNKVKGHWDEIFSETDFKYDISFKIINFGTVGK.

A signal peptide spans Met-1 to Gly-19. A lipid anchor (N-palmitoyl cysteine) is attached at Cys-20. Cys-20 is lipidated: S-diacylglycerol cysteine.

It belongs to the GerABKC lipoprotein family.

Its subcellular location is the cell membrane. Its function is as follows. Involved in the response to the germinative mixture of L-asparagine, glucose, fructose and potassium ions (AGFK). Cannot stimulate germination in the absence of gerD and gerK gene products (fructose and glucose receptors respectively). The polypeptide is Spore germination protein B3 (gerBC) (Bacillus subtilis (strain 168)).